We begin with the raw amino-acid sequence, 167 residues long: uncharacterized protein (167 aa).

It to B.subtilis XkdI.

This is an uncharacterized protein from Bacillus subtilis (strain 168).